A 55-amino-acid chain; its full sequence is Protein CADMIUM TOLERANCE 1 (55 aa).

Residues 24 to 40 (GCLYACIFTALCCFCCY) traverse the membrane as a helical segment.

The protein belongs to the CYSTM1 family.

The protein resides in the cell membrane. It is found in the secreted. Its subcellular location is the cell wall. In terms of biological role, confers resistance to heavy metal ions (e.g. cadmium (CdCl(2)) and copper (CuCl(2))) by chelating them at the plasma membrane of root cells, thus stopping their entry and reducing their accumulation. Binds to aluminium (Al). This Oryza sativa subsp. indica (Rice) protein is Protein CADMIUM TOLERANCE 1.